The chain runs to 434 residues: Alpha-enolase (434 aa).

Ser2 is modified (N-acetylserine). Lys5 carries the N6-acetyllysine modification. Ser27 is modified (phosphoserine). Position 40 (Ser40) interacts with Mg(2+). The residue at position 44 (Tyr44) is a Phosphotyrosine. The residue at position 60 (Lys60) is an N6-acetyllysine; alternate. Lys60 bears the N6-succinyllysine; alternate mark. N6-acetyllysine occurs at positions 64 and 71. Lys89 carries the post-translational modification N6-acetyllysine; alternate. An N6-succinyllysine; alternate modification is found at Lys89. Residues Lys92 and Lys126 each carry the N6-acetyllysine modification. Positions 158 and 167 each coordinate substrate. Residues Lys193 and Lys199 each carry the N6-acetyllysine modification. N6-acetyllysine; alternate is present on Lys202. Lys202 is covalently cross-linked (Glycyl lysine isopeptide (Lys-Gly) (interchain with G-Cter in SUMO2); alternate). The active-site Proton donor is Glu210. N6-acetyllysine; alternate is present on residues Lys228 and Lys233. Lys228 carries the N6-succinyllysine; alternate modification. An N6-(2-hydroxyisobutyryl)lysine; alternate modification is found at Lys228. Lys233 bears the N6-malonyllysine; alternate mark. Asp245 provides a ligand contact to Mg(2+). The residue at position 254 (Ser254) is a Phosphoserine. At Lys256 the chain carries N6-acetyllysine. Residues Ser263 and Ser272 each carry the phosphoserine modification. Lys281 is subject to N6-acetyllysine; alternate. Lys281 is modified (N6-(2-hydroxyisobutyryl)lysine; alternate). Lys285 carries the post-translational modification N6-acetyllysine. At Tyr287 the chain carries Phosphotyrosine. Ser291 carries the post-translational modification Phosphoserine. Positions 293 and 318 each coordinate Mg(2+). Substrate-binding residues include Glu293 and Asp318. Lys335 and Lys343 each carry N6-acetyllysine. Lys343 (proton acceptor) is an active-site residue. Residues 370-373 and Lys394 contribute to the substrate site; that span reads SHRS. The tract at residues 405-434 is required for interaction with PLG; the sequence is AKYNQLLRIEEELGSKAKFAGRNFRNPLAK. The residue at position 406 (Lys406) is an N6-acetyllysine. Residue Lys420 is modified to N6-acetyllysine; alternate. Lys420 carries the post-translational modification N6-succinyllysine; alternate. An N6-malonyllysine; alternate modification is found at Lys420.

Belongs to the enolase family. As to quaternary structure, mammalian enolase is composed of 3 isozyme subunits, alpha, beta and gamma, which can form homodimers or heterodimers which are cell-type and development-specific. ENO1 interacts with PLG in the neuronal plasma membrane and promotes its activation. The C-terminal lysine is required for this binding. Interacts with ENO4 and PGAM2. Interacts with CMTM6. Mg(2+) is required as a cofactor. ISGylated. In terms of processing, lysine 2-hydroxyisobutyrylation (Khib) by p300/EP300 activates the phosphopyruvate hydratase activity.

The protein localises to the cytoplasm. The protein resides in the cell membrane. The catalysed reaction is (2R)-2-phosphoglycerate = phosphoenolpyruvate + H2O. It functions in the pathway carbohydrate degradation; glycolysis; pyruvate from D-glyceraldehyde 3-phosphate: step 4/5. Functionally, glycolytic enzyme the catalyzes the conversion of 2-phosphoglycerate to phosphoenolpyruvate. In addition to glycolysis, involved in various processes such as growth control, hypoxia tolerance and allergic responses. May also function in the intravascular and pericellular fibrinolytic system due to its ability to serve as a receptor and activator of plasminogen on the cell surface of several cell-types such as leukocytes and neurons. Stimulates immunoglobulin production. The chain is Alpha-enolase (ENO1) from Macaca fascicularis (Crab-eating macaque).